The primary structure comprises 1257 residues: Stromal processing peptidase, chloroplastic (1257 aa).

The N-terminal 142 residues, 1-142, are a transit peptide targeting the chloroplast; it reads MAASTSTSSL…ASVKRVQLPH (142 aa). Zn(2+) is bound at residue H236. Catalysis depends on E239, which acts as the Proton acceptor. A Zn(2+)-binding site is contributed by H240. The active site involves E309. E316 contributes to the Zn(2+) binding site. The disordered stretch occupies residues 1233 to 1257; sequence EEAGEGYPGVLPMGRGLSTMTRPTT.

Belongs to the peptidase M16 family. Requires Zn(2+) as cofactor.

The protein localises to the plastid. It is found in the chloroplast stroma. Its function is as follows. Cleaves presequences (transit peptides) from chloroplastic protein precursors. Initially recognizes a precursor by binding to the C-terminus of its transit peptide and then removes the transit peptide in a single endoproteolytic step. In a next step, pursues the cleavage of transit peptide to a subfragment form. This is Stromal processing peptidase, chloroplastic from Pisum sativum (Garden pea).